The chain runs to 247 residues: 3-oxoacyl-[acyl-carrier-protein] reductase MabA (247 aa).

NADP(+)-binding positions include 25-27, R47, 61-62, G90, Y153, K157, I186, and R197; these read RGI and DV. Y153 functions as the Proton acceptor in the catalytic mechanism.

This sequence belongs to the short-chain dehydrogenases/reductases (SDR) family. In terms of assembly, homotetramer.

The protein resides in the secreted. The protein localises to the cell wall. It catalyses the reaction a (3R)-hydroxyacyl-[ACP] + NADP(+) = a 3-oxoacyl-[ACP] + NADPH + H(+). Its pathway is lipid metabolism; mycolic acid biosynthesis. Part of the mycobacterial fatty acid elongation system FAS-II, which is involved in mycolic acid biosynthesis. Catalyzes the NADPH-dependent reduction of beta-ketoacyl derivatives, the second step of the FAS-II elongation cycle. The polypeptide is 3-oxoacyl-[acyl-carrier-protein] reductase MabA (Mycobacterium bovis (strain ATCC BAA-935 / AF2122/97)).